The chain runs to 468 residues: Probable citrate synthase, mitochondrial (468 aa).

Residues His303, His349, and Asp404 contribute to the active site.

The protein belongs to the citrate synthase family. Homodimer.

The protein localises to the mitochondrion matrix. The catalysed reaction is oxaloacetate + acetyl-CoA + H2O = citrate + CoA + H(+). It participates in carbohydrate metabolism; tricarboxylic acid cycle; isocitrate from oxaloacetate: step 1/2. The chain is Probable citrate synthase, mitochondrial (cts-1) from Caenorhabditis elegans.